The following is a 209-amino-acid chain: Ribosomal RNA large subunit methyltransferase E (209 aa).

The S-adenosyl-L-methionine site is built by Gly-63, Trp-65, Asp-83, Asp-99, and Asp-124. Lys-164 acts as the Proton acceptor in catalysis.

Belongs to the class I-like SAM-binding methyltransferase superfamily. RNA methyltransferase RlmE family.

The protein localises to the cytoplasm. It carries out the reaction uridine(2552) in 23S rRNA + S-adenosyl-L-methionine = 2'-O-methyluridine(2552) in 23S rRNA + S-adenosyl-L-homocysteine + H(+). Functionally, specifically methylates the uridine in position 2552 of 23S rRNA at the 2'-O position of the ribose in the fully assembled 50S ribosomal subunit. The chain is Ribosomal RNA large subunit methyltransferase E from Aliivibrio salmonicida (strain LFI1238) (Vibrio salmonicida (strain LFI1238)).